We begin with the raw amino-acid sequence, 384 residues long: Branched-chain-amino-acid aminotransferase 1, mitochondrial (384 aa).

A mitochondrion-targeting transit peptide spans 1–18; that stretch reads MALRRCLPQYSTTSSYLS. Position 231 is an N6-(pyridoxal phosphate)lysine (lysine 231).

The protein belongs to the class-IV pyridoxal-phosphate-dependent aminotransferase family. Pyridoxal 5'-phosphate serves as cofactor.

Its subcellular location is the mitochondrion. It catalyses the reaction L-leucine + 2-oxoglutarate = 4-methyl-2-oxopentanoate + L-glutamate. The enzyme catalyses L-isoleucine + 2-oxoglutarate = (S)-3-methyl-2-oxopentanoate + L-glutamate. It carries out the reaction L-valine + 2-oxoglutarate = 3-methyl-2-oxobutanoate + L-glutamate. Its pathway is amino-acid degradation; L-leucine degradation; 4-methyl-2-oxopentanoate from L-leucine (aminotransferase route): step 1/1. The protein operates within amino-acid degradation; L-valine degradation. Converts 2-oxo acids to branched-chain amino acids. Acts on leucine, isoleucine and valine. The protein is Branched-chain-amino-acid aminotransferase 1, mitochondrial (BCAT1) of Arabidopsis thaliana (Mouse-ear cress).